The following is a 640-amino-acid chain: Threonine--tRNA ligase (640 aa).

A TGS domain is found at methionine 1–threonine 61. The segment at aspartate 242–proline 533 is catalytic. Zn(2+) is bound by residues cysteine 333, histidine 384, and histidine 510.

This sequence belongs to the class-II aminoacyl-tRNA synthetase family. In terms of assembly, homodimer. Requires Zn(2+) as cofactor.

The protein resides in the cytoplasm. The catalysed reaction is tRNA(Thr) + L-threonine + ATP = L-threonyl-tRNA(Thr) + AMP + diphosphate + H(+). In terms of biological role, catalyzes the attachment of threonine to tRNA(Thr) in a two-step reaction: L-threonine is first activated by ATP to form Thr-AMP and then transferred to the acceptor end of tRNA(Thr). Also edits incorrectly charged L-seryl-tRNA(Thr). The polypeptide is Threonine--tRNA ligase (Pseudomonas savastanoi pv. phaseolicola (strain 1448A / Race 6) (Pseudomonas syringae pv. phaseolicola (strain 1448A / Race 6))).